The primary structure comprises 291 residues: Transmembrane O-methyltransferase (291 aa).

Residues 31–51 traverse the membrane as a helical segment; it reads VGTMSPAIALAFLPLVVTLLV. Residues Glu-137, 139 to 140, Ser-145, Glu-163, and Ser-193 each bind S-adenosyl-L-methionine; that span reads GT.

Belongs to the class I-like SAM-binding methyltransferase superfamily. Cation-dependent O-methyltransferase family. In terms of assembly, interacts with LHFPL5, PCDH15, TMC1, TMC2 and TMIE. Interacts directly with TMC1. The interaction of TOMT with TMC1 and TMC2 is required for the transportation of TMC1/2 into the stereocilia of hair cells.

It is found in the membrane. It localises to the cytoplasm. The protein localises to the endoplasmic reticulum. It catalyses the reaction a catechol + S-adenosyl-L-methionine = a guaiacol + S-adenosyl-L-homocysteine + H(+). In terms of biological role, catalyzes the O-methylation, and thereby the inactivation, of catecholamine neurotransmitters and catechol hormones. Required for auditory function. Component of the cochlear hair cell's mechanotransduction (MET) machinery. Involved in the assembly of the asymmetric tip-link MET complex. Required for transportation of TMC1 and TMC2 proteins into the mechanically sensitive stereocilia of the hair cells. The function in MET is independent of the enzymatic activity. This chain is Transmembrane O-methyltransferase, found in Pan troglodytes (Chimpanzee).